A 403-amino-acid polypeptide reads, in one-letter code: Soluble calcium-activated nucleotidase 1 (403 aa).

The Cytoplasmic segment spans residues 1–44 (MPIQPFDQREWNEPMHSLRISVGGLPVLASMTKATDPRFRPRWR). Residues 45 to 61 (VILTSFVGAALLWLLYS) traverse the membrane as a helical; Signal-anchor for type II membrane protein segment. Topologically, residues 62 to 403 (HHQGPVPGRP…TVKYEGIEFI (342 aa)) are lumenal. Residue Asn-90 is glycosylated (N-linked (GlcNAc...) asparagine). The Ca(2+) site is built by Ser-170, Asp-171, Glu-217, Glu-286, Ser-347, and Glu-398.

The protein belongs to the apyrase family. Monomer. Homodimer; dimerization is Ca(2+)-dependent. The cofactor is Ca(2+).

Its subcellular location is the endoplasmic reticulum membrane. The protein localises to the golgi apparatus. The protein resides in the golgi stack membrane. It catalyses the reaction a ribonucleoside 5'-diphosphate + H2O = a ribonucleoside 5'-phosphate + phosphate + H(+). Functionally, calcium-dependent nucleotidase with a preference for UDP. The order of activity with different substrates is UDP &gt; GDP &gt; IDP &gt;&gt; UTP &gt; CDP = GTP = ITP. Has very low activity towards ADP and even lower activity towards ATP. Does not hydrolyze AMP and GMP. Involved in proteoglycan synthesis. In Mus musculus (Mouse), this protein is Soluble calcium-activated nucleotidase 1 (Cant1).